We begin with the raw amino-acid sequence, 197 residues long: SGTPSSTGTDGGYYYSWWTDGAGDATYQNNGGGSYTLTWSGNNGNLVGGKGWNPGAASRSISYSGTYQPNGNSYLSVYGWTRSSLIEYYIVESYGSYDPSSAASHKGSVTCNGATYDILSTWRYNAPSIDGTQTFEQFWSVRNPKKAPGGSISGTVDVQCHFDAWKGLGMNLGSEHNYQIVATEGYQSSGTATITVT.

Residues 1 to 197 (SGTPSSTGTD…SSGTATITVT (197 aa)) enclose the GH11 domain. Catalysis depends on E87, which acts as the Nucleophile. A disulfide bridge connects residues C111 and C160. E184 functions as the Proton donor in the catalytic mechanism.

It belongs to the glycosyl hydrolase 11 (cellulase G) family.

The protein localises to the secreted. The enzyme catalyses Endohydrolysis of (1-&gt;4)-beta-D-xylosidic linkages in xylans.. The protein operates within glycan degradation; xylan degradation. Functionally, hydrolyzes xylans into xylobiose and xylose. The polypeptide is Endo-1,4-beta-xylanase A (XYNA) (Schizophyllum commune (Split gill fungus)).